Here is a 124-residue protein sequence, read N- to C-terminus: CD59 glycoprotein (124 aa).

An N-terminal signal peptide occupies residues M1 to S24. A UPAR/Ly6 domain is found at S25–G101. Intrachain disulfides connect C28–C51, C31–C38, C44–C64, C70–C88, and C89–C94. N37 is a glycosylation site (N-linked (GlcNAc...) asparagine). The GPI-anchor amidated glycine moiety is linked to residue G101. Positions T102–L124 are cleaved as a propeptide — removed in mature form.

In terms of assembly, interacts with T-cell surface antigen CD2. In terms of processing, N- and O-glycosylated.

Its subcellular location is the cell membrane. It is found in the secreted. Its function is as follows. Potent inhibitor of the complement membrane attack complex (MAC) action, which protects self-cells from damage during complement activation. Acts by binding to the beta-haipins of C8 (C8A and C8B) components of the assembling MAC, forming an intermolecular beta-sheet that prevents incorporation of the multiple copies of C9 required for complete formation of the osmolytic pore. The chain is CD59 glycoprotein from Oryctolagus cuniculus (Rabbit).